Reading from the N-terminus, the 782-residue chain is E3 ubiquitin-protein ligase SopA (782 aa).

The tract at residues 137–171 (VSVSANNRPTVSEGRTPPVSPSLSLQATSSPSSPA) is disordered. Low complexity predominate over residues 157 to 171 (PSLSLQATSSPSSPA). Catalysis depends on Cys753, which acts as the Glycyl thioester intermediate.

This sequence belongs to the SopA E3 ligase family. Post-translationally, ubiquitinated in the presence of host E1 ubiquitin-activating enzyme, E2 ubiquitin-conjugating enzyme and ubiquitin.

It is found in the secreted. Its subcellular location is the host mitochondrion. It catalyses the reaction S-ubiquitinyl-[E2 ubiquitin-conjugating enzyme]-L-cysteine + [acceptor protein]-L-lysine = [E2 ubiquitin-conjugating enzyme]-L-cysteine + N(6)-ubiquitinyl-[acceptor protein]-L-lysine.. Functionally, effector proteins function to alter host cell physiology and promote bacterial survival in host tissues. This protein is an E3 ubiquitin ligase that interferes with host's ubiquitination pathway. Required for inducing polymorphonuclear leukocytes migration across the intestinal epithelium. The polypeptide is E3 ubiquitin-protein ligase SopA (sopA) (Salmonella dublin).